Consider the following 332-residue polypeptide: Cell division protein ZipA (332 aa).

Residues 1–6 (MMQDLR) lie on the Periplasmic side of the membrane. The chain crosses the membrane as a helical span at residues 7-27 (LILIVVGAIAIIALLLHGLWT). At 28–332 (SRKERSSLFR…RIRDVLKANA (305 aa)) the chain is on the cytoplasmic side. Positions 40–51 (PVKRAKKARDET) are enriched in basic and acidic residues. Positions 40-189 (PVKRAKKARD…VQPAPQQPAE (150 aa)) are disordered. Positions 76-88 (SFDSASVDSSSFD) are enriched in low complexity. Residues 93–105 (AREDVRSEAKSPF) show a composition bias toward basic and acidic residues.

This sequence belongs to the ZipA family. Interacts with FtsZ via their C-terminal domains.

Its subcellular location is the cell inner membrane. In terms of biological role, essential cell division protein that stabilizes the FtsZ protofilaments by cross-linking them and that serves as a cytoplasmic membrane anchor for the Z ring. Also required for the recruitment to the septal ring of downstream cell division proteins. This chain is Cell division protein ZipA, found in Pectobacterium atrosepticum (strain SCRI 1043 / ATCC BAA-672) (Erwinia carotovora subsp. atroseptica).